A 315-amino-acid polypeptide reads, in one-letter code: MEEAYLALGKKILEEGHFKEDRTGTGTYSLFGYQMRFDLAKGFPLLTTKRVPFGLIKSELLWFLKGDTNIRYLLERNNHIWDEWAFERYVKSADYQGPDMTDFGHRVLQDPAFAEQYKEEHQKFCDAILNDAEFAEKYGELGNIYGAQWRHWETKDGSFIDQLANVIEMIKTNPDSRRLIVSAWNPEDVPSMALPPCHTMFQFYVNEGKLSCQLYQRSADVFLGVPFNIASYALLTHLIAHETGLEVGEFVHTLGDAHLYQNHVEQMQEQLSREVRSFPTLVLNPDKASVFDFDMEDIKVEGYDPHPTIKAPIAV.

DUMP-binding positions include Arg22 and 177–178 (RR). Catalysis depends on Cys197, which acts as the Nucleophile. DUMP-binding positions include 217-220 (RSAD), Asn228, and 258-260 (HLY). Asp220 serves as a coordination point for (6R)-5,10-methylene-5,6,7,8-tetrahydrofolate. Ala314 lines the (6R)-5,10-methylene-5,6,7,8-tetrahydrofolate pocket.

Belongs to the thymidylate synthase family. Bacterial-type ThyA subfamily. In terms of assembly, homodimer.

The protein resides in the cytoplasm. It carries out the reaction dUMP + (6R)-5,10-methylene-5,6,7,8-tetrahydrofolate = 7,8-dihydrofolate + dTMP. It functions in the pathway pyrimidine metabolism; dTTP biosynthesis. Functionally, catalyzes the reductive methylation of 2'-deoxyuridine-5'-monophosphate (dUMP) to 2'-deoxythymidine-5'-monophosphate (dTMP) while utilizing 5,10-methylenetetrahydrofolate (mTHF) as the methyl donor and reductant in the reaction, yielding dihydrofolate (DHF) as a by-product. This enzymatic reaction provides an intracellular de novo source of dTMP, an essential precursor for DNA biosynthesis. This is Thymidylate synthase from Enterococcus faecalis (strain ATCC 700802 / V583).